Here is a 223-residue protein sequence, read N- to C-terminus: Coiled-coil domain-containing protein 124 (223 aa).

Residues 1 to 126 are disordered; that stretch reads MPKKFQGENT…AEKAKSHLEV (126 aa). Residues 15–82 are a coiled coil; it reads ARARRAEAKA…LLEEEDSKLK (68 aa). Composition is skewed to basic and acidic residues over residues 18-74 and 99-126; these read RRAE…QRLL and QIED…HLEV. S141 and S194 each carry phosphoserine. A disordered region spans residues 204–223; the sequence is WLRSPDNPMNQRAVPFNAPK.

This sequence belongs to the CCDC124 family. In terms of assembly, associates with translationally inactive ribosomes in the nonrotated state. Interacts with RASGEF1B. In terms of tissue distribution, ubiquitously expressed.

Its subcellular location is the cytoplasm. The protein localises to the cytoskeleton. The protein resides in the microtubule organizing center. It localises to the centrosome. It is found in the midbody. In terms of biological role, ribosome-binding protein involved in ribosome hibernation: associates with translationally inactive ribosomes and stabilizes the nonrotated conformation of the 80S ribosome, thereby promoting ribosome preservation and storage. Also required for proper progression of late cytokinetic stages. This is Coiled-coil domain-containing protein 124 from Homo sapiens (Human).